The sequence spans 87 residues: Cell division topological specificity factor (87 aa).

Belongs to the MinE family.

Prevents the cell division inhibition by proteins MinC and MinD at internal division sites while permitting inhibition at polar sites. This ensures cell division at the proper site by restricting the formation of a division septum at the midpoint of the long axis of the cell. The polypeptide is Cell division topological specificity factor (Roseiflexus castenholzii (strain DSM 13941 / HLO8)).